Consider the following 322-residue polypeptide: Nodulation protein D 1 (322 aa).

In terms of domain architecture, HTH lysR-type spans L6–T63. Positions L23–T42 form a DNA-binding region, H-T-H motif.

The protein belongs to the LysR transcriptional regulatory family.

Its function is as follows. Regulates the expression of the nod abcFE genes which encode other nodulation proteins. NodD is also a negative regulator of its own expression. Binds flavonoids as inducers. The sequence is that of Nodulation protein D 1 (nodD1) from Sinorhizobium fredii (strain NBRC 101917 / NGR234).